We begin with the raw amino-acid sequence, 366 residues long: MRTLKIFALAVSLLSMLAAPVQASRIKDIASVQGVRSNQLIGYGLVVGLPGTGEQTPFTDQTFRTMLGNFGINIPANERPKIDNVAAVAVHAELPAFAKPGQKIDVTVSSVGSADGLTGGTLMQTFLKGANGEVYAVAQGSLIVGGLGAEGNDGSRIVINTPTVGRIPNGGVVEREVRSGFGSSDYLTFNLHQSDFTTAKRMAETINNLVGDGTAQAVDATSVRVRAPRDLSQRVSYMSTLENLEVQQASASAKIIVNARTGTIVVGQNVELRPAAVAHGNMQVTIAENVNVDQPNPFADGETAITPQSIIDVNQEDARMFVFQPGTTLNDLVRAVNQIGAAPGDMIAVLEALKQAGALSGELIVI.

The first 23 residues, 1 to 23 (MRTLKIFALAVSLLSMLAAPVQA), serve as a signal peptide directing secretion.

It belongs to the FlgI family. In terms of assembly, the basal body constitutes a major portion of the flagellar organelle and consists of four rings (L,P,S, and M) mounted on a central rod.

It is found in the periplasm. The protein localises to the bacterial flagellum basal body. Functionally, assembles around the rod to form the L-ring and probably protects the motor/basal body from shearing forces during rotation. In Idiomarina loihiensis (strain ATCC BAA-735 / DSM 15497 / L2-TR), this protein is Flagellar P-ring protein.